The chain runs to 245 residues: Complement C1q subcomponent subunit A (245 aa).

Residues 1–22 form the signal peptide; that stretch reads METSQGWLVACVLAVTLVWTVA. Positions 31 to 109 constitute a Collagen-like domain; the sequence is GKDGVAGIPG…KGVKGNPGNI (79 aa). The tract at residues 35-111 is disordered; sequence VAGIPGRPGR…VKGNPGNIRD (77 aa). 4-hydroxyproline is present on residues Pro-39 and Pro-45. Position 48 is a 5-hydroxylysine (Lys-48). The O-linked (Gal...) hydroxylysine glycan is linked to Lys-48. Position 54 is a 4-hydroxyproline (Pro-54). A 5-hydroxylysine modification is found at Lys-67. A glycan (O-linked (Gal...) hydroxylysine) is linked at Lys-67. Residues Pro-79 and Pro-85 each carry the 4-hydroxyproline modification. At Lys-100 the chain carries 5-hydroxylysine. An O-linked (Gal...) hydroxylysine glycan is attached at Lys-100. Positions 110–245 constitute a C1q domain; it reads RDQPRPAFSA…FSGFLIFPSA (136 aa). A glycan (N-linked (GlcNAc...) asparagine) is linked at Asn-146. A disulfide bridge links Cys-172 with Cys-190. Gln-199 contributes to the Ca(2+) binding site.

As to quaternary structure, core component of the complement C1 complex, a calcium-dependent complex composed of 1 molecule of the C1Q subcomplex, 2 molecules of C1R and 2 molecules of C1S. The C1Q subcomplex is composed 18 subunits: 3 chains of C1QA, C1QB, and C1QC trimerize to form 6 collagen-like triple helices connected to six globular ligand-recognition modules (C1q domain). Interacts with CR1 (via Sushi 24 and Sushi 25 domains). Interacts (via C-terminus) with CD33; this interaction activates CD33 inhibitory motifs. In terms of processing, O-linked glycans are assumed to be the Glc-Gal disaccharides typically found as secondary modifications of hydroxylated lysines in collagen-like domains.

The protein localises to the secreted. It localises to the cell surface. With respect to regulation, the C1Q subcomplex is inhibited by sulfated molecules, such as triterpenoid sulfates, heparan sulfate, or chondroitin sulfates. Core component of the complement C1 complex, a multiprotein complex that initiates the classical pathway of the complement system, a cascade of proteins that leads to phagocytosis and breakdown of pathogens and signaling that strengthens the adaptive immune system. The classical complement pathway is initiated by the C1Q subcomplex of the C1 complex, which specifically binds IgG or IgM immunoglobulins complexed with antigens, forming antigen-antibody complexes on the surface of pathogens: C1QA, together with C1QB and C1QC, specifically recognizes and binds the Fc regions of IgG or IgM via its C1q domain. Immunoglobulin-binding activates the proenzyme C1R, which cleaves C1S, initiating the proteolytic cascade of the complement system. The C1Q subcomplex is activated by a hexamer of IgG complexed with antigens, while it is activated by a pentameric IgM. The C1Q subcomplex also recognizes and binds phosphatidylserine exposed on the surface of cells undergoing programmed cell death, possibly promoting activation of the complement system. The sequence is that of Complement C1q subcomponent subunit A from Rattus norvegicus (Rat).